A 552-amino-acid polypeptide reads, in one-letter code: Glycosyltransferase family 92 protein RCOM_0530710 (552 aa).

A helical; Signal-anchor transmembrane segment spans residues tryptophan 12–phenylalanine 34. The GT92 domain occupies lysine 277–tryptophan 520.

The protein belongs to the glycosyltransferase 92 family.

It is found in the membrane. The protein is Glycosyltransferase family 92 protein RCOM_0530710 of Ricinus communis (Castor bean).